A 240-amino-acid chain; its full sequence is MEKPKYNRIVLKLSGEALAGEQGNGINPTVIQSIAKQVKEIAELDVEVAVVVGGGNLWRGKTGSDLGMDRATADYMGMLATVMNSLALQDSLETLGIQSRVQTSIEMRQVAEPYIRRKAIRHLEKKRVVIFAAGTGNPYFSTDTTAALRAAEIEADVILMAKNNVDGVYNADPRKDESAVKYEKLSYLDVLKDGLEVMDSTASSLCMDNDIPLIVFSIMEEGNIKRAVIGESIGTIVRGK.

Lys-12–Gly-15 is a binding site for ATP. Residues Gly-20–Gly-25 are involved in allosteric activation by GTP. Gly-54 provides a ligand contact to UMP. Gly-55 and Arg-59 together coordinate ATP. UMP-binding positions include Asp-74 and Thr-135–Thr-142. The ATP site is built by Asn-163, Tyr-169, and Asp-172.

It belongs to the UMP kinase family. In terms of assembly, homohexamer.

It localises to the cytoplasm. The catalysed reaction is UMP + ATP = UDP + ADP. It functions in the pathway pyrimidine metabolism; CTP biosynthesis via de novo pathway; UDP from UMP (UMPK route): step 1/1. Its activity is regulated as follows. Allosterically activated by GTP. Inhibited by UTP. Functionally, catalyzes the reversible phosphorylation of UMP to UDP. The protein is Uridylate kinase of Bacillus velezensis (strain DSM 23117 / BGSC 10A6 / LMG 26770 / FZB42) (Bacillus amyloliquefaciens subsp. plantarum).